A 432-amino-acid polypeptide reads, in one-letter code: MSVIVKVIGREIMDSRGNPTVEADVHLADGSWGRAAAPSGASTGTREALELRDGDKSRYLGKGVLKAVGFINNEIATALAGQNALEQSTVDQVMLDLDGTENKEKLGANAILAVSLATAKAAAQSKKVELYEHIADLNGTPGVYSMPLPMMNIINGGEHADNSVDIQEFMIQPIGAKNFREALRMGAEIFHSLAKVLKADGHSTAVGDEGGFAPNLASNEAALAAIKVAVANAGYELGKDITLALDCAASEFYDKEANIYNLKGEGKKFTSEEFNFFLQDLTQQYPIVSIEDGLDESDWDGFAHQTKLMGDKIQLVGDDLFVTNTKILKRGIDNGIANSILIKFNQIGSLTETLAAIKMAKDAGFTVVISHRSGETEDSTIADLAVGTAAGQIKTGSLSRSDRVAKYNQLLRIEEQLGDKAPYNGLKEVKGQ.

Q167 provides a ligand contact to (2R)-2-phosphoglycerate. The active-site Proton donor is the E209. The Mg(2+) site is built by D246, E291, and D318. (2R)-2-phosphoglycerate-binding residues include K343, R372, S373, and K394. Catalysis depends on K343, which acts as the Proton acceptor.

Belongs to the enolase family. As to quaternary structure, component of the RNA degradosome, a multiprotein complex involved in RNA processing and mRNA degradation. The cofactor is Mg(2+).

It localises to the cytoplasm. It is found in the secreted. The protein resides in the cell surface. The catalysed reaction is (2R)-2-phosphoglycerate = phosphoenolpyruvate + H2O. Its pathway is carbohydrate degradation; glycolysis; pyruvate from D-glyceraldehyde 3-phosphate: step 4/5. Its function is as follows. Catalyzes the reversible conversion of 2-phosphoglycerate (2-PG) into phosphoenolpyruvate (PEP). It is essential for the degradation of carbohydrates via glycolysis. This is Enolase from Pseudoalteromonas translucida (strain TAC 125).